The sequence spans 363 residues: Adenylate cyclase 2 (363 aa).

A Guanylate cyclase domain is found at 157-286 (VFLFIDLAGS…DTVNTTARLE (130 aa)). Residues aspartate 162 and aspartate 206 each contribute to the Mg(2+) site. A disordered region spans residues 341–363 (GDGATEPAGETVRSPAAEAFTSL).

Belongs to the adenylyl cyclase class-3 family. It depends on Mg(2+) as a cofactor.

The catalysed reaction is ATP = 3',5'-cyclic AMP + diphosphate. Plays essential roles in regulation of cellular metabolism by catalyzing the synthesis of a second messenger, cAMP. This Rhizobium meliloti (strain 1021) (Ensifer meliloti) protein is Adenylate cyclase 2 (cya2).